Here is a 459-residue protein sequence, read N- to C-terminus: Protein king tubby (459 aa).

The disordered stretch occupies residues 114–205; it reads HELEDEESSP…SNGAGGESEG (92 aa). Residues 123 to 155 are compositionally biased toward polar residues; that stretch reads PVTVIEQQQTAPHSANSTHSQRPSTTRQPSFND. Serine 152 is subject to Phosphoserine.

The protein belongs to the TUB family.

Its subcellular location is the cytoplasm. It localises to the nucleus. The protein localises to the cell projection. It is found in the cilium membrane. The protein resides in the rhabdomere. The chain is Protein king tubby from Drosophila persimilis (Fruit fly).